Here is a 362-residue protein sequence, read N- to C-terminus: Leucoanthocyanidin dioxygenase (362 aa).

In terms of domain architecture, Fe2OG dioxygenase spans 211 to 313 (MEELLLQKKI…RISWAVFCEP (103 aa)). Fe cation-binding residues include His238, Asp240, and His294.

This sequence belongs to the iron/ascorbate-dependent oxidoreductase family. Fe cation is required as a cofactor. L-ascorbate serves as cofactor.

It catalyses the reaction a (2R,3S,4S)-leucoanthocyanidin + 2-oxoglutarate + O2 = a 4-H-anthocyanidin with a 3-hydroxy group + succinate + CO2 + 2 H2O. The protein operates within pigment biosynthesis; anthocyanin biosynthesis. Oxidation of leucoanthocyanidins into anthocyanidins. This is Leucoanthocyanidin dioxygenase from Vitis vinifera (Grape).